The chain runs to 478 residues: Protein WVD2-like 7 (478 aa).

2 disordered regions span residues 201-326 (DSAL…TGST) and 385-420 (PMPSFYNIGTRPVSHNKTEPSKVAQSRSRPATSASI). Residues 208–217 (AGSKLDEHAS) show a composition bias toward basic and acidic residues. 2 stretches are compositionally biased toward polar residues: residues 219-232 (KPSNSMETPSSSVN) and 264-277 (GSSLSSNSKTNVDA). The span at 278–289 (KSQKELRPKKTI) shows a compositional bias: basic and acidic residues. Polar residues-rich tracts occupy residues 309–326 (RCKTSTTSSKLEMSTGST) and 407–420 (VAQSRSRPATSASI).

Belongs to the TPX2 family. As to expression, expressed in seedlings.

It is found in the cytoplasm. The protein localises to the cytoskeleton. In terms of biological role, microtubule-associated protein (MAP) that regulates the orientation of interphase cortical microtubules. This chain is Protein WVD2-like 7, found in Arabidopsis thaliana (Mouse-ear cress).